The following is a 336-amino-acid chain: tRNA N6-adenosine threonylcarbamoyltransferase (336 aa).

Residues histidine 111 and histidine 115 each coordinate Fe cation. Residues 134–138, aspartate 167, glycine 180, and asparagine 270 each bind substrate; that span reads LVSGG. Aspartate 298 contacts Fe cation.

It belongs to the KAE1 / TsaD family. The cofactor is Fe(2+).

The protein localises to the cytoplasm. The enzyme catalyses L-threonylcarbamoyladenylate + adenosine(37) in tRNA = N(6)-L-threonylcarbamoyladenosine(37) in tRNA + AMP + H(+). Required for the formation of a threonylcarbamoyl group on adenosine at position 37 (t(6)A37) in tRNAs that read codons beginning with adenine. Is involved in the transfer of the threonylcarbamoyl moiety of threonylcarbamoyl-AMP (TC-AMP) to the N6 group of A37, together with TsaE and TsaB. TsaD likely plays a direct catalytic role in this reaction. In Acinetobacter baumannii (strain SDF), this protein is tRNA N6-adenosine threonylcarbamoyltransferase.